The primary structure comprises 51 residues: Epididymal sperm protein E (51 aa).

The segment at 8–39 is a zinc-finger region; sequence CVRCRRKTPSFNSKTVTFRNKRRAIRSHCAYC.

As to expression, sperm.

The protein resides in the nucleus. This chain is Epididymal sperm protein E, found in Sepia officinalis (Common cuttlefish).